The chain runs to 184 residues: ATP synthase subunit b, chloroplastic (184 aa).

The chain crosses the membrane as a helical span at residues 27-49 (LATNPINLSVVLGVLIFFGKGVL).

This sequence belongs to the ATPase B chain family. In terms of assembly, F-type ATPases have 2 components, F(1) - the catalytic core - and F(0) - the membrane proton channel. F(1) has five subunits: alpha(3), beta(3), gamma(1), delta(1), epsilon(1). F(0) has four main subunits: a(1), b(1), b'(1) and c(10-14). The alpha and beta chains form an alternating ring which encloses part of the gamma chain. F(1) is attached to F(0) by a central stalk formed by the gamma and epsilon chains, while a peripheral stalk is formed by the delta, b and b' chains.

It is found in the plastid. Its subcellular location is the chloroplast thylakoid membrane. Functionally, f(1)F(0) ATP synthase produces ATP from ADP in the presence of a proton or sodium gradient. F-type ATPases consist of two structural domains, F(1) containing the extramembraneous catalytic core and F(0) containing the membrane proton channel, linked together by a central stalk and a peripheral stalk. During catalysis, ATP synthesis in the catalytic domain of F(1) is coupled via a rotary mechanism of the central stalk subunits to proton translocation. Its function is as follows. Component of the F(0) channel, it forms part of the peripheral stalk, linking F(1) to F(0). The chain is ATP synthase subunit b, chloroplastic from Citrus sinensis (Sweet orange).